Consider the following 87-residue polypeptide: uncharacterized protein (87 aa).

The protein belongs to the SF3B5 family.

This is an uncharacterized protein from Arabidopsis thaliana (Mouse-ear cress).